We begin with the raw amino-acid sequence, 155 residues long: SsrA-binding protein (155 aa).

Belongs to the SmpB family.

It localises to the cytoplasm. Functionally, required for rescue of stalled ribosomes mediated by trans-translation. Binds to transfer-messenger RNA (tmRNA), required for stable association of tmRNA with ribosomes. tmRNA and SmpB together mimic tRNA shape, replacing the anticodon stem-loop with SmpB. tmRNA is encoded by the ssrA gene; the 2 termini fold to resemble tRNA(Ala) and it encodes a 'tag peptide', a short internal open reading frame. During trans-translation Ala-aminoacylated tmRNA acts like a tRNA, entering the A-site of stalled ribosomes, displacing the stalled mRNA. The ribosome then switches to translate the ORF on the tmRNA; the nascent peptide is terminated with the 'tag peptide' encoded by the tmRNA and targeted for degradation. The ribosome is freed to recommence translation, which seems to be the essential function of trans-translation. This is SsrA-binding protein from Halothermothrix orenii (strain H 168 / OCM 544 / DSM 9562).